A 79-amino-acid chain; its full sequence is D-alanyl carrier protein (79 aa).

Residues Met1–Met77 form the Carrier domain. Ser35 bears the O-(pantetheine 4'-phosphoryl)serine mark.

This sequence belongs to the DltC family. In terms of processing, 4'-phosphopantetheine is transferred from CoA to a specific serine of apo-DCP.

The protein localises to the cytoplasm. The protein operates within cell wall biogenesis; lipoteichoic acid biosynthesis. In terms of biological role, carrier protein involved in the D-alanylation of lipoteichoic acid (LTA). The loading of thioester-linked D-alanine onto DltC is catalyzed by D-alanine--D-alanyl carrier protein ligase DltA. The DltC-carried D-alanyl group is further transferred to cell membrane phosphatidylglycerol (PG) by forming an ester bond, probably catalyzed by DltD. D-alanylation of LTA plays an important role in modulating the properties of the cell wall in Gram-positive bacteria, influencing the net charge of the cell wall. The polypeptide is D-alanyl carrier protein (Streptococcus suis (strain 98HAH33)).